The following is a 167-amino-acid chain: Epithelial membrane protein 2 (167 aa).

A helical transmembrane segment spans residues 1-21; the sequence is MLVLLAFIIAFHITSAALLFI. 3 N-linked (GlcNAc...) asparagine glycosylation sites follow: N44, N47, and N52. The next 3 helical transmembrane spans lie at 67 to 87, 95 to 115, and 143 to 163; these read TMILSTILCCIAFFIFVLQLF, FVLTSIIQLMSCLCVMIAASI, and YILAWVAFACTFISGMMYLIL.

Belongs to the PMP-22/EMP/MP20 family. Interacts with PTK2; regulates PTK2 activation and localization. Interacts with ITGB3; regulates the levels of the heterodimer ITGA5-ITGB3 integrin surface expression. Interacts with P2RX7 (via C-terminus). Interacts with ITGB1; the interaction may be direct or indirect and ITGB1 has a heterodimer form.

Its subcellular location is the golgi apparatus membrane. It localises to the cell membrane. The protein localises to the apical cell membrane. The protein resides in the membrane raft. It is found in the cytoplasm. Its subcellular location is the nucleus. It localises to the perinuclear region. Its function is as follows. Functions as a key regulator of cell membrane composition by regulating protein surface expression. Also, plays a role in regulation of processes including cell migration, cell proliferation, cell contraction and cell adhesion. Regulates transepithelial migration of neutrophils into the alveolar lumen, potentially via mediation of cell surface expression of adhesion markers and lipid raft formation. Negatively regulates caveolae formation by reducing CAV1 expression and CAV1 amount by increasing lysosomal degradation. Facilitates surface trafficking and the formation of lipid rafts bearing GPI-anchor proteins. Regulates surface expression of MHC1 and ICAM1 proteins increasing susceptibility to T-cell mediated cytotoxicity. Regulates the plasma membrane expression of the integrin heterodimers ITGA6-ITGB1, ITGA5-ITGB3 and ITGA5-ITGB1 resulting in modulation of cell-matrix adhesion. Also regulates many processes through PTK2. Regulates blood vessel endothelial cell migration and angiogenesis by regulating VEGF protein expression through PTK2 activation. Regulates cell migration and cell contraction through PTK2 and SRC activation. Regulates focal adhesion density, F-actin conformation and cell adhesion capacity through interaction with PTK2. Positively regulates cell proliferation. Plays a role during cell death and cell blebbing. Promotes angiogenesis and vasculogenesis through induction of VEGFA via a HIF1A-dependent pathway. Also plays a role in embryo implantation by regulating surface trafficking of integrin heterodimer ITGA5-ITGB3. Plays a role in placental angiogenesis and uterine natural killer cell regulation at the maternal-fetal placental interface, however not required in the maternal tissues for a viable pregnancy. Involved in the early stages of embryogenic development and cardiogenesis, potentially via regulation of epithelial-mesenchymal transition timing. May play a role in glomerular filtration. The chain is Epithelial membrane protein 2 (EMP2) from Pan troglodytes (Chimpanzee).